The following is a 163-amino-acid chain: Lipoprotein signal peptidase (163 aa).

3 helical membrane-spanning segments follow: residues 11-31, 63-83, and 88-108; these read ILIA…IATT, KMTF…YFFI, and YNLF…GNFI. Residues D118 and D136 contribute to the active site. Residues 131-151 traverse the membrane as a helical segment; the sequence is IFNIADSSLTIGVILIIIALL.

The protein belongs to the peptidase A8 family.

It localises to the cell membrane. It carries out the reaction Release of signal peptides from bacterial membrane prolipoproteins. Hydrolyzes -Xaa-Yaa-Zaa-|-(S,diacylglyceryl)Cys-, in which Xaa is hydrophobic (preferably Leu), and Yaa (Ala or Ser) and Zaa (Gly or Ala) have small, neutral side chains.. The protein operates within protein modification; lipoprotein biosynthesis (signal peptide cleavage). In terms of biological role, this protein specifically catalyzes the removal of signal peptides from prolipoproteins. This Staphylococcus aureus protein is Lipoprotein signal peptidase.